Reading from the N-terminus, the 519-residue chain is 2,3-bisphosphoglycerate-independent phosphoglycerate mutase (519 aa).

Asp18 and Ser68 together coordinate Mn(2+). Ser68 acts as the Phosphoserine intermediate in catalysis. Residues His129, 159–160 (RD), Arg191, Arg197, 267–270 (RADR), and Lys341 each bind substrate. Residues Asp408, His412, Asp449, His450, and His468 each coordinate Mn(2+).

This sequence belongs to the BPG-independent phosphoglycerate mutase family. In terms of assembly, monomer. Mn(2+) serves as cofactor.

It carries out the reaction (2R)-2-phosphoglycerate = (2R)-3-phosphoglycerate. It participates in carbohydrate degradation; glycolysis; pyruvate from D-glyceraldehyde 3-phosphate: step 3/5. Its function is as follows. Catalyzes the interconversion of 2-phosphoglycerate and 3-phosphoglycerate. The chain is 2,3-bisphosphoglycerate-independent phosphoglycerate mutase from Coxiella burnetii (strain RSA 493 / Nine Mile phase I).